The sequence spans 251 residues: Endoglucanase CX (251 aa).

Belongs to the glycosyl hydrolase 9 (cellulase E) family.

It carries out the reaction Endohydrolysis of (1-&gt;4)-beta-D-glucosidic linkages in cellulose, lichenin and cereal beta-D-glucans.. Degrades carboxymethylcellulose (CMC). The polypeptide is Endoglucanase CX (Prunus persica (Peach)).